The sequence spans 273 residues: MNRQVIEFSKYNPSGNMTILVHSKHDASEYASIANQLMAATHVCCEQVGFIESTQNDDGNDFHLVMSGNEFCGNATMSYIHHLQESHLLKDQQFKVKVSGCSDLVQCAIHDCQYYEVQMPQAHRVVPTTINMGNHSWKALEIIYETYVHYVIPVKQVTTEIQHLVEAFVREQQWSHKYKTVGMMLFDEQRQFLQPLIYIPEIQSLIWENSCGSGTASIGVFNNYQRNDACKDFTVHQPGGSILVTSKRCHQLGYQTSIKGQVTTVATGKAYIE.

The active-site Proton acceptor is Cys-72. Residue Cys-211 is the Proton donor of the active site.

Belongs to the histidine racemase family. As to quaternary structure, homodimer.

The protein resides in the cytoplasm. The enzyme catalyses L-histidine = D-histidine. Isomerase that catalyzes the conversion of L-histidine to D-histidine. Functions the biosynthesis of the metallophore staphylopine, which is involved in the acquisition of nickel, cobalt, zinc, copper, and iron, and thus enables bacterial growth inside the host, where metal access is limited. Therefore, this enzyme probably contributes to staphylococcal virulence. The reaction is reversible in vitro, the enzyme can produce D-histidine from the L-stereoisomer and vice versa. Appears to be specific for histidine as it cannot use other amino acids as substrate, including L-alanine and L-methionine. This chain is Histidine racemase, found in Staphylococcus aureus (strain Mu50 / ATCC 700699).